A 200-amino-acid chain; its full sequence is Pyridoxine/pyridoxamine 5'-phosphate oxidase (200 aa).

FMN contacts are provided by residues 49-54 (RMLLLK), 64-65 (YT), R70, K71, and Q93. K54 serves as a coordination point for substrate. The substrate site is built by Y111, R115, and S119. FMN-binding positions include 128–129 (QS) and W173. Substrate is bound at residue 179–181 (RLH). Residue R183 coordinates FMN.

It belongs to the pyridoxamine 5'-phosphate oxidase family. As to quaternary structure, homodimer. FMN is required as a cofactor.

The catalysed reaction is pyridoxamine 5'-phosphate + O2 + H2O = pyridoxal 5'-phosphate + H2O2 + NH4(+). It carries out the reaction pyridoxine 5'-phosphate + O2 = pyridoxal 5'-phosphate + H2O2. The protein operates within cofactor metabolism; pyridoxal 5'-phosphate salvage; pyridoxal 5'-phosphate from pyridoxamine 5'-phosphate: step 1/1. Its pathway is cofactor metabolism; pyridoxal 5'-phosphate salvage; pyridoxal 5'-phosphate from pyridoxine 5'-phosphate: step 1/1. In terms of biological role, catalyzes the oxidation of either pyridoxine 5'-phosphate (PNP) or pyridoxamine 5'-phosphate (PMP) into pyridoxal 5'-phosphate (PLP). The sequence is that of Pyridoxine/pyridoxamine 5'-phosphate oxidase from Gluconobacter oxydans (strain 621H) (Gluconobacter suboxydans).